We begin with the raw amino-acid sequence, 247 residues long: UPF0280 protein MmarC7_0482 (247 aa).

Belongs to the UPF0280 family.

This Methanococcus maripaludis (strain C7 / ATCC BAA-1331) protein is UPF0280 protein MmarC7_0482.